We begin with the raw amino-acid sequence, 369 residues long: Protein RIC-3 (369 aa).

A signal peptide spans 1-28 (MAYSTVQRVALASGLVLALSLLLPKAFL). The Lumenal portion of the chain corresponds to 29–95 (SRGKRQEPPP…AGGGGSGRGL (67 aa)). The segment at 30 to 67 (RGKRQEPPPTPEGKLGRFPPMMHHHQAPSDGQTPGARF) is disordered. A helical membrane pass occupies residues 96–116 (MGQIIPIYGFGIFLYILYILF). The Cytoplasmic segment spans residues 117–369 (KLSKGKTTAE…LRKRNPQGLE (253 aa)). The stretch at 140–169 (RKITSFELAQLQEKLKETEAAMEKLINRVG) forms a coiled coil. Lys-202 carries the N6-acetyllysine; alternate modification. Lys-202 is covalently cross-linked (Glycyl lysine isopeptide (Lys-Gly) (interchain with G-Cter in ubiquitin); alternate). Disordered stretches follow at residues 272-295 (ESDH…SVTS) and 316-369 (LAEN…QGLE). Residues 332 to 346 (ETTKEEWSQDFKDEG) are compositionally biased toward basic and acidic residues. The span at 360–369 (LRKRNPQGLE) shows a compositional bias: basic residues.

It belongs to the ric-3 family. In terms of assembly, monomer and homodimer. Interacts with CHRNA7, CHRNA3, CHRNA4, CHRNB2, CHRNB4 and HTR3A. In terms of tissue distribution, broadly expressed, with high levels in muscle, brain, heart, pancreas and testis. In the central nervous system, highest levels are detected in the cerebellum and pituitary gland. Over-expressed in brains from patients with bipolar disease or schizophrenia. Isoform 5 is predominantly expressed in the brain.

Its subcellular location is the endoplasmic reticulum membrane. The protein resides in the golgi apparatus membrane. In terms of biological role, molecular chaperone which facilitates proper subunit assembly and surface trafficking of alpha-7 (CHRNA7) and alpha-8 (CHRNA8) nicotinic acetylcholine receptors. May also promote functional expression of homomeric serotoninergic 5-HT3 receptors, and of heteromeric acetylcholine receptors alpha-3/beta-2, alpha-3/beta-4, alpha-4/beta-2 and alpha-4/beta-4. The sequence is that of Protein RIC-3 (RIC3) from Homo sapiens (Human).